Consider the following 483-residue polypeptide: MKYTATIGLEVHAQILTKSKMFSGCNAAYASAPANSCIDEVSIGLPGTLPVVNQEAIRKAALLGLALNCEIPEYCEFSRKSYTYPDLPKAWQITMYDKPICINGELEITLGNGETKRVGITRAHLEEDTGMLQHGDETHSLVDYNRSGVPLLEIVSEPDMTTPEEARLYATKLRQILVFLGVNSGNLEEGALRVDANVSIRPEGQKEFGTKVEIKNMNSFRNLERALVYELERQEKVLREGGTIIQETRGWDDAAGITLSQRSKEHAHDYRYFPEPDLPPLELSREWVAERRAELPELPDAKFARYLSEFGLSKQDAALLSGERETADYFETIVATAGAANAKPVANWITGELFRLIKDGAETLAEVAKRVTPANLTSLIDVVAKGEIGSTVAKQVFEEMYRTGETPTAIINAKGLRQISDSSVLTQAARDAIAANPKVVADYKSGKLPAIKFLVGQVMRATKGQANPQVVEEALKTELDATN.

It belongs to the GatB/GatE family. GatB subfamily. As to quaternary structure, heterotrimer of A, B and C subunits.

The catalysed reaction is L-glutamyl-tRNA(Gln) + L-glutamine + ATP + H2O = L-glutaminyl-tRNA(Gln) + L-glutamate + ADP + phosphate + H(+). It catalyses the reaction L-aspartyl-tRNA(Asn) + L-glutamine + ATP + H2O = L-asparaginyl-tRNA(Asn) + L-glutamate + ADP + phosphate + 2 H(+). In terms of biological role, allows the formation of correctly charged Asn-tRNA(Asn) or Gln-tRNA(Gln) through the transamidation of misacylated Asp-tRNA(Asn) or Glu-tRNA(Gln) in organisms which lack either or both of asparaginyl-tRNA or glutaminyl-tRNA synthetases. The reaction takes place in the presence of glutamine and ATP through an activated phospho-Asp-tRNA(Asn) or phospho-Glu-tRNA(Gln). The protein is Aspartyl/glutamyl-tRNA(Asn/Gln) amidotransferase subunit B of Herpetosiphon aurantiacus (strain ATCC 23779 / DSM 785 / 114-95).